A 246-amino-acid polypeptide reads, in one-letter code: MAQVNMRDLLKAGAHFGHQTRYWNPKMSKYIFGARNKIHIINLEHTLPALNDALAVIEKMVASNNKILFVGTKRAASKIVKEEARRAGQPFVNHRWLGGMLTNFKTIRVSIKRLRELEAMHEDGTFEKLTKKEVLMATREQDKLERSVGGIKDMGGLPDALFVVDVDHERIAINEANKLGIPVIGVVDTNSNPDGVDYVIPGNDDSIRAIQIYAQAVADVCVRAKDNSASEFVEVTETNENEAAAE.

Belongs to the universal ribosomal protein uS2 family.

The chain is Small ribosomal subunit protein uS2 from Chromohalobacter salexigens (strain ATCC BAA-138 / DSM 3043 / CIP 106854 / NCIMB 13768 / 1H11).